A 477-amino-acid chain; its full sequence is Myc-associated zinc finger protein (477 aa).

Disordered regions lie at residues 59 to 78 (AQSPFQAAPAPPPTPQAPAA) and 121 to 144 (TVDTAALKQPPAPPPPPPAVSAPA). A compositionally biased stretch (pro residues) spans 130-140 (PPAPPPPPPAV). 4 consecutive C2H2-type zinc fingers follow at residues 190 to 212 (YICALCAKEFKNGYNLRRHEAIH), 279 to 301 (HACEMCGKAFRDVYHLNRHKLSH), 307 to 329 (YQCPVCQQRFKRKDRMSYHVRSH), and 337 to 360 (YNCSHCGKSFSRPDHLNSHVRQVH). The residue at position 361 (S361) is a Phosphoserine. The C2H2-type 5 zinc finger occupies 366–388 (FKCEKCEAAFATKDRLRAHTVRH). The C2H2-type 6; atypical zinc-finger motif lies at 392–413 (VPCHVCGKMLSSAYISDHMKVH).

As to quaternary structure, interacts with BPTF. Expressed in Purkinje cells in the brain (at protein level).

The protein resides in the nucleus. Transcriptional regulator. Acts as a transcriptional activator that binds to purine-rich GAGA sites found in the promoter of many genes including insulin I and II and islet amyloid polypeptide. In Mus musculus (Mouse), this protein is Myc-associated zinc finger protein (Maz).